The primary structure comprises 260 residues: Thiazole synthase (260 aa).

Catalysis depends on Lys-96, which acts as the Schiff-base intermediate with DXP. 1-deoxy-D-xylulose 5-phosphate is bound by residues Gly-157, 184-185, and 206-207; these read AG and NT.

This sequence belongs to the ThiG family. In terms of assembly, homotetramer. Forms heterodimers with either ThiH or ThiS.

Its subcellular location is the cytoplasm. It catalyses the reaction [ThiS sulfur-carrier protein]-C-terminal-Gly-aminoethanethioate + 2-iminoacetate + 1-deoxy-D-xylulose 5-phosphate = [ThiS sulfur-carrier protein]-C-terminal Gly-Gly + 2-[(2R,5Z)-2-carboxy-4-methylthiazol-5(2H)-ylidene]ethyl phosphate + 2 H2O + H(+). It functions in the pathway cofactor biosynthesis; thiamine diphosphate biosynthesis. Catalyzes the rearrangement of 1-deoxy-D-xylulose 5-phosphate (DXP) to produce the thiazole phosphate moiety of thiamine. Sulfur is provided by the thiocarboxylate moiety of the carrier protein ThiS. In vitro, sulfur can be provided by H(2)S. This is Thiazole synthase from Rhodopseudomonas palustris (strain BisB5).